Here is a 281-residue protein sequence, read N- to C-terminus: Streptomycin biosynthesis protein StrF (281 aa).

It functions in the pathway antibiotic biosynthesis; streptomycin biosynthesis. May be involved in the formation of N-methyl-L-glucosamine. The protein is Streptomycin biosynthesis protein StrF (strF) of Streptomyces griseus.